The primary structure comprises 163 residues: Type VII secretion system protein EsaG (163 aa).

In terms of assembly, interacts with EssD (via C-terminus). Interacts with EssE.

The protein localises to the cytoplasm. Component of the type VII secretion system (Ess). Also acts as part of toxin-antitoxin system. Counteracts the toxic effect of EssD via direct interaction. This chain is Type VII secretion system protein EsaG, found in Staphylococcus aureus (strain NCTC 8325 / PS 47).